A 29-amino-acid polypeptide reads, in one-letter code: Trypsin inhibitor 5 (29 aa).

Cystine bridges form between Cys-3–Cys-20, Cys-10–Cys-22, and Cys-16–Cys-28.

It belongs to the protease inhibitor I7 (squash-type serine protease inhibitor) family.

The protein localises to the secreted. Strongly inhibits trypsin, weakly inhibits chymotrypsin. The chain is Trypsin inhibitor 5 from Cyclanthera pedata (Achocha).